A 202-amino-acid polypeptide reads, in one-letter code: Endothelin-1 (202 aa).

An N-terminal signal peptide occupies residues 1 to 23 (MDYFSMMVSLLLVAFHGAPETAA). A disordered region spans residues 24-49 (SGTELSTGAENPGEKPPASAPWRPRR). Residues 24-50 (SGTELSTGAENPGEKPPASAPWRPRRS) constitute a propeptide that is removed on maturation. 2 disulfides stabilise this stretch: C53/C67 and C55/C63. The propeptide occupies 74–202 (VNTPGHIVPY…EQKVTHNRTH (129 aa)). An endothelin-like region spans residues 110-124 (CQCTSPHDKKCWNFC).

The protein belongs to the endothelin/sarafotoxin family.

It is found in the secreted. Its function is as follows. Endothelins are endothelium-derived vasoconstrictor peptides. Probable ligand for G-protein coupled receptors EDNRA and EDNRB which activates PTK2B, BCAR1, BCAR3 and, GTPases RAP1 and RHOA cascade in glomerular mesangial cells. Also binds the DEAR/FBXW7-AS1 receptor. Promotes mesenteric arterial wall remodeling via activation of ROCK signaling and subsequent colocalization of NFATC3 with F-actin filaments. NFATC3 then translocates to the nucleus where it subsequently promotes the transcription of the smooth muscle hypertrophy and differentiation marker ACTA2. The chain is Endothelin-1 (EDN1) from Oryctolagus cuniculus (Rabbit).